The chain runs to 307 residues: S-methyl-5'-thioadenosine phosphorylase (307 aa).

Phosphate contacts are provided by residues Ser-16, 59 to 60 (RH), and 92 to 93 (SA). Met-198 contacts substrate. Residue Ser-199 coordinates phosphate. 222-224 (DYD) contacts substrate.

The protein belongs to the PNP/MTAP phosphorylase family. MTAP subfamily. In terms of assembly, homotrimer.

It is found in the cytoplasm. The protein resides in the nucleus. It catalyses the reaction S-methyl-5'-thioadenosine + phosphate = 5-(methylsulfanyl)-alpha-D-ribose 1-phosphate + adenine. Its pathway is amino-acid biosynthesis; L-methionine biosynthesis via salvage pathway; S-methyl-5-thio-alpha-D-ribose 1-phosphate from S-methyl-5'-thioadenosine (phosphorylase route): step 1/1. Catalyzes the reversible phosphorylation of S-methyl-5'-thioadenosine (MTA) to adenine and 5-methylthioribose-1-phosphate. Involved in the breakdown of MTA, a major by-product of polyamine biosynthesis. Responsible for the first step in the methionine salvage pathway after MTA has been generated from S-adenosylmethionine. Has broad substrate specificity with 6-aminopurine nucleosides as preferred substrates. The chain is S-methyl-5'-thioadenosine phosphorylase from Schizosaccharomyces pombe (strain 972 / ATCC 24843) (Fission yeast).